Here is a 297-residue protein sequence, read N- to C-terminus: PAK4-inhibitor INKA2 (297 aa).

Disordered stretches follow at residues 82–109, 175–200, and 234–285; these read GRGPARPTVCSPSSQPSLGSSTKFPSHR, LEKGGEKGETGGAREPKGEKGQPQEL, and TPMV…LEHS. Residues 92–102 show a composition bias toward low complexity; it reads SPSSQPSLGSS. Residues 137-180 are inka box; sequence EPDDWTSTLMSRGRNRQPLVLGDNVFADLVGNWLDLPELEKGGE. The span at 244–253 shows a compositional bias: basic residues; it reads RSQKVKKRSL.

Belongs to the INKA family. As to quaternary structure, interacts with PAK4.

Its subcellular location is the nucleus. Functionally, inhibitor of the serine/threonine-protein kinase PAK4. Acts by binding PAK4 in a substrate-like manner, inhibiting the protein kinase activity. The polypeptide is PAK4-inhibitor INKA2 (Homo sapiens (Human)).